The sequence spans 162 residues: Beta-carotene hydroxylase (162 aa).

A Fatty acid hydroxylase domain is found at Val-8–Phe-135.

The protein belongs to the sterol desaturase family.

The enzyme catalyses all-trans-beta-carotene + 4 reduced [2Fe-2S]-[ferredoxin] + 2 O2 + 4 H(+) = all-trans-zeaxanthin + 4 oxidized [2Fe-2S]-[ferredoxin] + 2 H2O. It participates in carotenoid biosynthesis; astaxanthin biosynthesis. In terms of biological role, catalyzes the hydroxylation reaction from beta-carotene to zeaxanthin via beta-cryptoxanthin. In Paracoccus sp. (strain N81106 / MBIC 01143) (Agrobacterium aurantiacum), this protein is Beta-carotene hydroxylase (crtZ).